The chain runs to 266 residues: Norfluorocurarine synthase 2 (266 aa).

The 111-residue stretch at 11–121 folds into the AB hydrolase-1 domain; that stretch reads HFVLVHGAGH…VMPDSTHPPN (111 aa). Residues Ser-86, Asp-216, and His-244 contribute to the active site.

It belongs to the AB hydrolase superfamily. As to quaternary structure, homodimer.

The enzyme catalyses 17-dehydropreakuammicine + H2O = norfluorocurarine + methanol + CO2. It functions in the pathway alkaloid biosynthesis. Hydrolase involved in the biosynthesis of curare monoterpene indole alkaloids (MIAs), natural products such as diaboline, a pharmacologically active compound used to regulate blood pressure. Curare alkaloids act as animal glycine receptor antagonists. Catalyzes the conversion of dehydropreakuammicine to norfluorocurarine. The sequence is that of Norfluorocurarine synthase 2 from Strychnos sp.